Reading from the N-terminus, the 440-residue chain is tRNA(Ile)-lysidine synthase (440 aa).

Residue 13 to 18 (SGGADS) coordinates ATP.

The protein belongs to the tRNA(Ile)-lysidine synthase family.

The protein resides in the cytoplasm. It carries out the reaction cytidine(34) in tRNA(Ile2) + L-lysine + ATP = lysidine(34) in tRNA(Ile2) + AMP + diphosphate + H(+). In terms of biological role, ligates lysine onto the cytidine present at position 34 of the AUA codon-specific tRNA(Ile) that contains the anticodon CAU, in an ATP-dependent manner. Cytidine is converted to lysidine, thus changing the amino acid specificity of the tRNA from methionine to isoleucine. The protein is tRNA(Ile)-lysidine synthase of Solibacter usitatus (strain Ellin6076).